We begin with the raw amino-acid sequence, 268 residues long: Malonyl-[acyl-carrier protein] O-methyltransferase (268 aa).

The protein belongs to the methyltransferase superfamily.

The enzyme catalyses malonyl-[ACP] + S-adenosyl-L-methionine = malonyl-[ACP] methyl ester + S-adenosyl-L-homocysteine. It participates in cofactor biosynthesis; biotin biosynthesis. In terms of biological role, converts the free carboxyl group of a malonyl-thioester to its methyl ester by transfer of a methyl group from S-adenosyl-L-methionine (SAM). It allows to synthesize pimeloyl-ACP via the fatty acid synthetic pathway. In Prosthecochloris aestuarii (strain DSM 271 / SK 413), this protein is Malonyl-[acyl-carrier protein] O-methyltransferase.